Consider the following 506-residue polypeptide: Histidine ammonia-lyase (506 aa).

Positions 143–145 form a cross-link, 5-imidazolinone (Ala-Gly); that stretch reads ASG. A 2,3-didehydroalanine (Ser) modification is found at serine 144.

The protein belongs to the PAL/histidase family. Contains an active site 4-methylidene-imidazol-5-one (MIO), which is formed autocatalytically by cyclization and dehydration of residues Ala-Ser-Gly.

Its subcellular location is the cytoplasm. It catalyses the reaction L-histidine = trans-urocanate + NH4(+). Its pathway is amino-acid degradation; L-histidine degradation into L-glutamate; N-formimidoyl-L-glutamate from L-histidine: step 1/3. The sequence is that of Histidine ammonia-lyase from Salmonella agona (strain SL483).